Consider the following 470-residue polypeptide: Properdin (470 aa).

The N-terminal stretch at 1–26 (MTAPVQVPQSLLLLLMLLLTLPATGS) is a signal peptide. 7 consecutive TSP type-1 domains span residues 27–75 (DPVL…QACR), 76–133 (SPRW…QCCP), 135–190 (MGGW…QVCP), 192–254 (HGAW…PPCP), 256–312 (AGGW…VPCP), 314–376 (DGEW…QNCI), and 380–463 (KGSW…PACK). 3 cysteine pairs are disulfide-bonded: Cys-31–Cys-55, Cys-42–Cys-71, and Cys-56–Cys-74. C-linked (Man) tryptophan glycans are attached at residues Trp-82 and Trp-85. 7 disulfide bridges follow: Cys-88-Cys-126, Cys-92-Cys-132, Cys-103-Cys-110, Cys-131-Cys-169, Cys-147-Cys-183, Cys-151-Cys-189, and Cys-162-Cys-173. C-linked (Man) tryptophan glycans are attached at residues Trp-138, Trp-141, and Trp-144. Thr-150 carries an O-linked (Fuc...) threonine glycan. C-linked (Man) tryptophan glycans are attached at residues Trp-195, Trp-198, and Trp-201. Intrachain disulfides connect Cys-204–Cys-247, Cys-208–Cys-253, and Cys-223–Cys-237. Residue Ser-207 is glycosylated (O-linked (Fuc...) serine). C-linked (Man) tryptophan glycans are attached at residues Trp-259 and Trp-262. 3 disulfides stabilise this stretch: Cys-268-Cys-305, Cys-272-Cys-311, and Cys-283-Cys-295. Thr-271 carries O-linked (Fuc...) threonine glycosylation. 2 C-linked (Man) tryptophan glycosylation sites follow: Trp-320 and Trp-323. Disulfide bonds link Cys-326–Cys-369, Cys-336–Cys-375, and Cys-349–Cys-359. The interval 350-358 (KGRKFNGQR) is interaction with Complement C3 beta chain. Trp-383, Trp-386, and Trp-389 each carry a C-linked (Man) tryptophan glycan. Disulfide bonds link Cys-392–Cys-456, Cys-396–Cys-462, and Cys-408–Cys-440. N-linked (GlcNAc...) asparagine glycosylation occurs at Asn-429.

In terms of assembly, in plasma, properdin exists as dimers, trimers or tetramers in the relative proportions of 26:54:20. Interacts with the pro-C3-convertase enzyme complex (C3b-Bb) comprised of Complement C3 beta chain (C3b) and the Complement factor B Bb fragment (Bb), where it binds (via its TSP type-1 5 domain) with C3b and Bb. This interaction stabilizes the complex and allows it to become the active C3-convertase enzyme complex (C3b-Bb-FP). Interacts with C3b. Interacts with CFB.

The protein localises to the secreted. Its function is as follows. A positive regulator of the alternate pathway of complement. It binds to and stabilizes the C3- and C5-convertase enzyme complexes. Inhibits CFI-CFH mediated degradation of Inhibits CFI-CFH mediated degradation of Complement C3 beta chain (C3b). The polypeptide is Properdin (CFP) (Cavia porcellus (Guinea pig)).